The chain runs to 101 residues: NADH-quinone oxidoreductase subunit K (101 aa).

3 consecutive transmembrane segments (helical) span residues 4 to 24 (VYDYLVLGVILFGLSLVGIML), 29 to 49 (IILLLVCVELMLLAVNTNFIA), and 61 to 81 (VFVFFILTVAAAEAAIGLAIV).

It belongs to the complex I subunit 4L family. NDH-1 is composed of 14 different subunits. Subunits NuoA, H, J, K, L, M, N constitute the membrane sector of the complex.

The protein localises to the cell inner membrane. It carries out the reaction a quinone + NADH + 5 H(+)(in) = a quinol + NAD(+) + 4 H(+)(out). NDH-1 shuttles electrons from NADH, via FMN and iron-sulfur (Fe-S) centers, to quinones in the respiratory chain. The immediate electron acceptor for the enzyme in this species is believed to be ubiquinone. Couples the redox reaction to proton translocation (for every two electrons transferred, four hydrogen ions are translocated across the cytoplasmic membrane), and thus conserves the redox energy in a proton gradient. This Legionella pneumophila (strain Paris) protein is NADH-quinone oxidoreductase subunit K.